The primary structure comprises 336 residues: Tyrosine recombinase XerC (336 aa).

One can recognise a Core-binding (CB) domain in the interval 14-106 (VARCRWLEPF…SVKSFYRFLL (93 aa)). Residues 127 to 330 (KVPRFVSEEE…TFSRLKEIYD (204 aa)) enclose the Tyr recombinase domain. Catalysis depends on residues Arg-183, Lys-207, His-282, Arg-285, and His-308. Residue Tyr-317 is the O-(3'-phospho-DNA)-tyrosine intermediate of the active site.

Belongs to the 'phage' integrase family. XerC subfamily. Forms a cyclic heterotetrameric complex composed of two molecules of XerC and two molecules of XerD.

It is found in the cytoplasm. In terms of biological role, site-specific tyrosine recombinase, which acts by catalyzing the cutting and rejoining of the recombining DNA molecules. The XerC-XerD complex is essential to convert dimers of the bacterial chromosome into monomers to permit their segregation at cell division. It also contributes to the segregational stability of plasmids. This is Tyrosine recombinase XerC from Chlorobaculum parvum (strain DSM 263 / NCIMB 8327) (Chlorobium vibrioforme subsp. thiosulfatophilum).